The following is a 251-amino-acid chain: Core protein VP8 (251 aa).

A propeptide spans 1–32 (removed by core protease OPG083); the sequence is MSLLLENLIEEDTIFFAGSISEYDDLQMVIAG.

This sequence belongs to the orthopoxvirus OPG098 family. Post-translationally, undergoes morphogenesis-associated proteolysis which cleaves the 28 kDa to a 25-kDa product. Proteolytic cleavage of major core proteins P4a (OPG136), P4b (OPG129), and VP8 (OPG098), which occurs at a late stage of core formation, is required for production of infectious mature virions (MV).

It is found in the virion. The protein resides in the host cytoplasm. Functionally, major core structural protein. In Homo sapiens (Human), this protein is Core protein VP8 (OPG098).